The sequence spans 232 residues: Probable GTP-binding protein EngB (232 aa).

One can recognise an EngB-type G domain in the interval 13–188 (IGLEVAFAGR…AGVMGNWYEY (176 aa)). GTP-binding positions include 21-28 (GRSNAGKS), 48-52 (GRTQM), 67-70 (DLPG), 134-137 (TKAD), and 167-169 (FSA). Mg(2+) is bound by residues Ser28 and Thr50.

It belongs to the TRAFAC class TrmE-Era-EngA-EngB-Septin-like GTPase superfamily. EngB GTPase family. It depends on Mg(2+) as a cofactor.

Necessary for normal cell division and for the maintenance of normal septation. This is Probable GTP-binding protein EngB from Psychrobacter arcticus (strain DSM 17307 / VKM B-2377 / 273-4).